Here is a 298-residue protein sequence, read N- to C-terminus: Mitochondrial basic amino acids transporter (298 aa).

A run of 6 helical transmembrane segments spans residues alanine 2–phenylalanine 22, glycine 61–glycine 81, phenylalanine 96–alanine 116, glycine 153–tyrosine 172, leucine 187–threonine 207, and leucine 255–tyrosine 275. Solcar repeat units lie at residues alanine 2 to alanine 86, aspartate 90 to alanine 178, and aspartate 185 to tyrosine 275.

Belongs to the mitochondrial carrier (TC 2.A.29) family.

It localises to the mitochondrion inner membrane. It catalyses the reaction L-lysine(out) + L-arginine(in) = L-lysine(in) + L-arginine(out). The catalysed reaction is L-histidine(out) + L-arginine(in) = L-histidine(in) + L-arginine(out). It carries out the reaction L-ornithine(in) + L-arginine(out) = L-ornithine(out) + L-arginine(in). The enzyme catalyses L-homoarginine(in) + L-arginine(out) = L-homoarginine(out) + L-arginine(in). It catalyses the reaction N(omega)-methyl-L-arginine(in) + L-arginine(out) = N(omega)-methyl-L-arginine(out) + L-arginine(in). The catalysed reaction is L-arginine(in) = L-arginine(out). It carries out the reaction L-lysine(in) = L-lysine(out). The enzyme catalyses L-ornithine(in) = L-ornithine(out). It catalyses the reaction L-histidine(out) = L-histidine(in). Its function is as follows. Mitochondrial transporter of arginine, lysine, homoarginine, methylarginine and, to a much lesser extent, ornithine and histidine. Does not transport carnitine nor acylcarnitines. Functions by both counter-exchange and uniport mechanisms. Plays a physiological role in the import of basic amino acids into mitochondria for mitochondrial protein synthesis and amino acid degradation. This Bos taurus (Bovine) protein is Mitochondrial basic amino acids transporter (SLC25A29).